A 267-amino-acid chain; its full sequence is Integral membrane protein 2C (267 aa).

Phosphothreonine is present on Thr-37. Residues 55 to 75 (VGGVCYLSMGMVVLLMGLVFA) traverse the membrane as a helical; Signal-anchor for type II membrane protein segment. Residues 136–230 (FGGGDPADII…LCNGKDTYRL (95 aa)) form the BRICHOS domain. Residues Cys-163 and Cys-222 are joined by a disulfide bond. An N-linked (GlcNAc...) asparagine glycan is attached at Asn-169.

It belongs to the ITM2 family. As to quaternary structure, interacts with BACE1. Interacts with APP. Interacts with STMN2. Type I membrane-bound, as well as soluble, furin has a pre-eminent role in ITM2C proteolytic processing. PCSK7 and PCSK5 may also be involved although to a lesser extent. The soluble form of PCSK7 is incapable of processing ITM2C. Fails to undergo shedding by ADAM10 and intramembrane cleavage by SPPL2B.

It is found in the lysosome membrane. It localises to the cell membrane. Functionally, negative regulator of amyloid-beta peptide production. May inhibit the processing of APP by blocking its access to alpha- and beta-secretase. Binding to the beta-secretase-cleaved APP C-terminal fragment is negligible, suggesting that ITM2C is a poor gamma-secretase cleavage inhibitor. May play a role in TNF-induced cell death and neuronal differentiation. The protein is Integral membrane protein 2C (ITM2C) of Macaca fascicularis (Crab-eating macaque).